The sequence spans 662 residues: UvrABC system protein B (662 aa).

Positions Asp25–Arg411 constitute a Helicase ATP-binding domain. Gly38 to Thr45 is an ATP binding site. A Beta-hairpin motif is present at residues Tyr91–Ile114. A Helicase C-terminal domain is found at Gln428–Leu594. One can recognise a UVR domain in the interval Lys625–Ile660.

Belongs to the UvrB family. In terms of assembly, forms a heterotetramer with UvrA during the search for lesions. Interacts with UvrC in an incision complex.

Its subcellular location is the cytoplasm. In terms of biological role, the UvrABC repair system catalyzes the recognition and processing of DNA lesions. A damage recognition complex composed of 2 UvrA and 2 UvrB subunits scans DNA for abnormalities. Upon binding of the UvrA(2)B(2) complex to a putative damaged site, the DNA wraps around one UvrB monomer. DNA wrap is dependent on ATP binding by UvrB and probably causes local melting of the DNA helix, facilitating insertion of UvrB beta-hairpin between the DNA strands. Then UvrB probes one DNA strand for the presence of a lesion. If a lesion is found the UvrA subunits dissociate and the UvrB-DNA preincision complex is formed. This complex is subsequently bound by UvrC and the second UvrB is released. If no lesion is found, the DNA wraps around the other UvrB subunit that will check the other stand for damage. The chain is UvrABC system protein B from Treponema denticola (strain ATCC 35405 / DSM 14222 / CIP 103919 / JCM 8153 / KCTC 15104).